Here is a 757-residue protein sequence, read N- to C-terminus: Protein transport protein SEC23-2 (757 aa).

Positions 56, 61, 80, and 83 each coordinate Zn(2+).

The protein belongs to the SEC23/SEC24 family. SEC23 subfamily. In terms of assembly, the COPII coat is composed of at least 5 proteins: the SEC23/24 complex, the SEC13/31 complex, and the protein SAR1.

The protein localises to the cytoplasm. It localises to the cytoplasmic vesicle. The protein resides in the COPII-coated vesicle membrane. It is found in the endoplasmic reticulum membrane. Its subcellular location is the golgi apparatus membrane. Functionally, component of the coat protein complex II (COPII) which promotes the formation of transport vesicles from the endoplasmic reticulum (ER). The coat has two main functions, the physical deformation of the endoplasmic reticulum membrane into vesicles and the selection of cargo molecules. The protein is Protein transport protein SEC23-2 (SEC232) of Candida glabrata (strain ATCC 2001 / BCRC 20586 / JCM 3761 / NBRC 0622 / NRRL Y-65 / CBS 138) (Yeast).